The primary structure comprises 501 residues: Glycerol kinase (501 aa).

Thr-14 contributes to the ADP binding site. Thr-14, Thr-15, and Ser-16 together coordinate ATP. Residue Thr-14 coordinates sn-glycerol 3-phosphate. Arg-18 lines the ADP pocket. Sn-glycerol 3-phosphate is bound by residues Arg-84, Glu-85, and Tyr-136. Glycerol-binding residues include Arg-84, Glu-85, and Tyr-136. His-231 is subject to Phosphohistidine; by HPr. Asp-245 contacts sn-glycerol 3-phosphate. Glycerol is bound by residues Asp-245 and Gln-246. ADP is bound by residues Thr-267 and Gly-310. Positions 267, 310, 314, and 411 each coordinate ATP. ADP is bound by residues Gly-411 and Asn-415.

This sequence belongs to the FGGY kinase family. As to quaternary structure, homotetramer and homodimer (in equilibrium). In terms of processing, the phosphoenolpyruvate-dependent sugar phosphotransferase system (PTS), including enzyme I, and histidine-containing protein (HPr) are required for the phosphorylation of His-231, which leads to the activation of the enzyme.

It carries out the reaction glycerol + ATP = sn-glycerol 3-phosphate + ADP + H(+). Its pathway is polyol metabolism; glycerol degradation via glycerol kinase pathway; sn-glycerol 3-phosphate from glycerol: step 1/1. With respect to regulation, activated by phosphorylation and inhibited by fructose 1,6-bisphosphate (FBP). Key enzyme in the regulation of glycerol uptake and metabolism. Catalyzes the phosphorylation of glycerol to yield sn-glycerol 3-phosphate. The chain is Glycerol kinase from Enterococcus faecalis (strain ATCC 700802 / V583).